Reading from the N-terminus, the 343-residue chain is UDP-3-O-acylglucosamine N-acyltransferase (343 aa).

H248 serves as the catalytic Proton acceptor.

It belongs to the transferase hexapeptide repeat family. LpxD subfamily. As to quaternary structure, homotrimer.

It carries out the reaction a UDP-3-O-[(3R)-3-hydroxyacyl]-alpha-D-glucosamine + a (3R)-hydroxyacyl-[ACP] = a UDP-2-N,3-O-bis[(3R)-3-hydroxyacyl]-alpha-D-glucosamine + holo-[ACP] + H(+). It participates in bacterial outer membrane biogenesis; LPS lipid A biosynthesis. Functionally, catalyzes the N-acylation of UDP-3-O-acylglucosamine using 3-hydroxyacyl-ACP as the acyl donor. Is involved in the biosynthesis of lipid A, a phosphorylated glycolipid that anchors the lipopolysaccharide to the outer membrane of the cell. This Microcystis aeruginosa (strain NIES-843 / IAM M-2473) protein is UDP-3-O-acylglucosamine N-acyltransferase.